A 181-amino-acid polypeptide reads, in one-letter code: uncharacterized protein (181 aa).

This is an uncharacterized protein from Enterobacteria phage T4 (Bacteriophage T4).